The following is a 169-amino-acid chain: Mu-like prophage FluMu host-nuclease inhibitor protein gam (169 aa).

The protein to phage Mu protein gam.

In terms of biological role, protects linear double-stranded DNA of Mu genome from exonuclease degradation. The chain is Mu-like prophage FluMu host-nuclease inhibitor protein gam from Haemophilus influenzae (strain ATCC 51907 / DSM 11121 / KW20 / Rd).